The following is a 241-amino-acid chain: Xyloglucan-specific endo-beta-1,4-glucanase 1 (241 aa).

The signal sequence occupies residues 1-19 (MKGFFAGVVAAATLAVASA). The active site involves glutamate 136. Asparagine 174 and asparagine 190 each carry an N-linked (GlcNAc...) asparagine glycan. The active site involves glutamate 222.

Belongs to the glycosyl hydrolase 12 (cellulase H) family. Interacts with host apoplastic glucanase inhibitor GIP1.

It localises to the secreted. It is found in the host. The enzyme catalyses xyloglucan + H2O = xyloglucan oligosaccharides.. The xyloglucanase activity is inhibited by the binding of the host apoplastic glucanase inhibitor GIP1. Functionally, glycoside hydrolase that exhibits xyloglucanase activity. Acts as an important virulence factor during P.sojae infection but also acts as a pathogen-associated molecular pattern (PAMP) in soybean and solanaceous species, where it can trigger defense responses including cell death. XEG1-induced cell death can be suppressed by P.sojae RxLR effectors. The PAMP activity is independent of its xyloglucanase activity. XEG1 induces plant defense responses in a RLP kinase Serk3/Bak1-dependent manner in Nicotiana benthamiana. Moreover, the perception of XEG1 occurs independently of the perception of ethylene-inducing xylanase Eix2 in Tomato. With truncated paralog XLP1, is required to elevate apoplastic sugar during P.sojae infection. This Phytophthora sojae (strain P6497) (Soybean stem and root rot agent) protein is Xyloglucan-specific endo-beta-1,4-glucanase 1.